The chain runs to 283 residues: Putative 4-diphosphocytidyl-2-C-methyl-D-erythritol kinase (283 aa).

Lys-11 is an active-site residue. ATP is bound at residue Pro-95 to Ser-105. Residue Asp-137 is part of the active site.

This sequence belongs to the GHMP kinase family. IspE subfamily.

It catalyses the reaction 4-CDP-2-C-methyl-D-erythritol + ATP = 4-CDP-2-C-methyl-D-erythritol 2-phosphate + ADP + H(+). Its function is as follows. Catalyzes the phosphorylation of the position 2 hydroxy group of 4-diphosphocytidyl-2C-methyl-D-erythritol. The protein is Putative 4-diphosphocytidyl-2-C-methyl-D-erythritol kinase of Streptococcus equi subsp. equi (strain 4047).